The following is a 604-amino-acid chain: Glutamine--fructose-6-phosphate aminotransferase [isomerizing] (604 aa).

C2 functions as the Nucleophile; for GATase activity in the catalytic mechanism. The Glutamine amidotransferase type-2 domain occupies 2–218 (CGIVGVVGNT…DKELVIVKKD (217 aa)). SIS domains follow at residues 284-423 (IIKS…ANGK) and 456-594 (VEQL…VDKP). Catalysis depends on K599, which acts as the For Fru-6P isomerization activity.

Homodimer.

It localises to the cytoplasm. It carries out the reaction D-fructose 6-phosphate + L-glutamine = D-glucosamine 6-phosphate + L-glutamate. Its function is as follows. Catalyzes the first step in hexosamine metabolism, converting fructose-6P into glucosamine-6P using glutamine as a nitrogen source. The chain is Glutamine--fructose-6-phosphate aminotransferase [isomerizing] from Streptococcus agalactiae serotype V (strain ATCC BAA-611 / 2603 V/R).